Reading from the N-terminus, the 179-residue chain is uncharacterized protein (179 aa).

This is an uncharacterized protein from Bacillus subtilis (strain 168).